A 178-amino-acid chain; its full sequence is Ras-like protein (178 aa).

1 to 6 (GGVGKS) serves as a coordination point for GTP. The Effector region signature appears at 21–29 (YDPTIEDSY). Residues 46–50 (DTAGQ) and 105–108 (NKCD) contribute to the GTP site. C175 is modified (cysteine methyl ester). Residue C175 is the site of S-geranylgeranyl cysteine attachment. Positions 176-178 (SIL) are cleaved as a propeptide — removed in mature form.

It belongs to the small GTPase superfamily. Ras family.

It localises to the cell membrane. The catalysed reaction is GTP + H2O = GDP + phosphate + H(+). Alternates between an inactive form bound to GDP and an active form bound to GTP. Activated by a guanine nucleotide-exchange factor (GEF) and inactivated by a GTPase-activating protein (GAP). Functionally, ras proteins bind GDP/GTP and possess intrinsic GTPase activity. The chain is Ras-like protein from Artemia salina (Brine shrimp).